The primary structure comprises 624 residues: Chaperone protein HtpG (624 aa).

An a; substrate-binding region spans residues 1–336; the sequence is MKGQETRGFQ…SSDLPLNVSR (336 aa). The tract at residues 337–552 is b; it reads EILQDSTVTR…ADEMSTQMAK (216 aa). Positions 553–624 are c; sequence LFAAAGQKVP…IRRMNQLLVS (72 aa).

Belongs to the heat shock protein 90 family. As to quaternary structure, homodimer.

The protein resides in the cytoplasm. Functionally, molecular chaperone. Has ATPase activity. The protein is Chaperone protein HtpG of Shigella boydii serotype 4 (strain Sb227).